A 118-amino-acid polypeptide reads, in one-letter code: Small ribosomal subunit protein uS13 (118 aa).

A disordered region spans residues 91-118 (HRRSLPVRGQRTKTNARTRKGPRKPIRK).

The protein belongs to the universal ribosomal protein uS13 family. In terms of assembly, part of the 30S ribosomal subunit. Forms a loose heterodimer with protein S19. Forms two bridges to the 50S subunit in the 70S ribosome.

Located at the top of the head of the 30S subunit, it contacts several helices of the 16S rRNA. In the 70S ribosome it contacts the 23S rRNA (bridge B1a) and protein L5 of the 50S subunit (bridge B1b), connecting the 2 subunits; these bridges are implicated in subunit movement. Contacts the tRNAs in the A and P-sites. The polypeptide is Small ribosomal subunit protein uS13 (Marinomonas sp. (strain MWYL1)).